Reading from the N-terminus, the 304-residue chain is Tetrahydromethanopterin S-methyltransferase subunit E (304 aa).

Helical transmembrane passes span 3–23 (PLIG…AGAS), 86–106 (PLFA…TFAV), 131–151 (HTPV…VVSY), 152–172 (LMTV…IWGI), 233–253 (PVTG…TTVF), and 263–283 (WISV…NWKI).

Belongs to the MtrE family. The complex is composed of 8 subunits; MtrA, MtrB, MtrC, MtrD, MtrE, MtrF, MtrG and MtrH.

It is found in the cell membrane. It carries out the reaction 5-methyl-5,6,7,8-tetrahydromethanopterin + coenzyme M + 2 Na(+)(in) = 5,6,7,8-tetrahydromethanopterin + methyl-coenzyme M + 2 Na(+)(out). The protein operates within one-carbon metabolism; methanogenesis from CO(2); methyl-coenzyme M from 5,10-methylene-5,6,7,8-tetrahydromethanopterin: step 2/2. In terms of biological role, part of a complex that catalyzes the formation of methyl-coenzyme M and tetrahydromethanopterin from coenzyme M and methyl-tetrahydromethanopterin. This is an energy-conserving, sodium-ion translocating step. This is Tetrahydromethanopterin S-methyltransferase subunit E from Methanosarcina acetivorans (strain ATCC 35395 / DSM 2834 / JCM 12185 / C2A).